A 199-amino-acid polypeptide reads, in one-letter code: uncharacterized protein (199 aa).

A helical membrane pass occupies residues 21–38; sequence ISPSATNFIVSLVIMILI.

The protein localises to the membrane. This is an uncharacterized protein from Saccharomyces cerevisiae (strain ATCC 204508 / S288c) (Baker's yeast).